Reading from the N-terminus, the 357-residue chain is Heat-inducible transcription repressor HrcA (357 aa).

Belongs to the HrcA family.

In terms of biological role, negative regulator of class I heat shock genes (grpE-dnaK-dnaJ and groELS operons). Prevents heat-shock induction of these operons. This is Heat-inducible transcription repressor HrcA from Chlorobium luteolum (strain DSM 273 / BCRC 81028 / 2530) (Pelodictyon luteolum).